The following is a 314-amino-acid chain: Olfactory receptor 10A3 (314 aa).

At 1–25 the chain is on the extracellular side; sequence MKRQNQSCVVEFILLGFSNFPELQV. Residue N5 is glycosylated (N-linked (GlcNAc...) asparagine). Residues 26–46 traverse the membrane as a helical segment; it reads QLFGVFLVIYVVTLMGNAIIT. At 47 to 54 the chain is on the cytoplasmic side; it reads VIISLNQS. A helical transmembrane segment spans residues 55-75; the sequence is LHVPMYLFLLNLSVVEVSFSA. At 76–99 the chain is on the extracellular side; the sequence is VITPEMLVVLSTEKTMISFVGCFA. The cysteines at positions 97 and 189 are disulfide-linked. A helical transmembrane segment spans residues 100–120; sequence QMYFILLFGGTECFLLGAMAY. The Cytoplasmic portion of the chain corresponds to 121-139; it reads DRFAAICHPLNYPVIMNRG. The chain crosses the membrane as a helical span at residues 140-160; it reads VFMKLVIFSWISGIMVATVQT. Residues 161 to 197 are Extracellular-facing; that stretch reads TWVFSFPFCGPNEINHLFCETPPVLELVCADTFLFEI. The helical transmembrane segment at 198–217 threads the bilayer; it reads YAFTGTILIVMVPFLLILLS. Over 218–237 the chain is Cytoplasmic; that stretch reads YIRVLFAILKMPSTTGRQKA. Residues 238–258 form a helical membrane-spanning segment; it reads FSTCASHLTSVTLFYGTANMT. Topologically, residues 259 to 271 are extracellular; that stretch reads YLQPKSGYSPETK. A helical membrane pass occupies residues 272–292; sequence KLISLAYTLLTPLLNPLIYSL. Topologically, residues 293 to 314 are cytoplasmic; it reads RNSEMKRTLIKLWRRKVILHTF.

Belongs to the G-protein coupled receptor 1 family.

It localises to the cell membrane. Functionally, odorant receptor. This is Olfactory receptor 10A3 (OR10A3) from Homo sapiens (Human).